The chain runs to 273 residues: Dermonecrotic toxin LdSicTox-alphaIB1aiv (273 aa).

H5 is a catalytic residue. Mg(2+)-binding residues include E25 and D27. H41 acts as the Nucleophile in catalysis. Cystine bridges form between C45–C51 and C47–C190. D85 contributes to the Mg(2+) binding site. N-linked (GlcNAc...) asparagine glycosylation is present at N250.

Belongs to the arthropod phospholipase D family. Class II subfamily. Mg(2+) is required as a cofactor. In terms of tissue distribution, expressed by the venom gland.

Its subcellular location is the secreted. The enzyme catalyses an N-(acyl)-sphingosylphosphocholine = an N-(acyl)-sphingosyl-1,3-cyclic phosphate + choline. It catalyses the reaction an N-(acyl)-sphingosylphosphoethanolamine = an N-(acyl)-sphingosyl-1,3-cyclic phosphate + ethanolamine. It carries out the reaction a 1-acyl-sn-glycero-3-phosphocholine = a 1-acyl-sn-glycero-2,3-cyclic phosphate + choline. The catalysed reaction is a 1-acyl-sn-glycero-3-phosphoethanolamine = a 1-acyl-sn-glycero-2,3-cyclic phosphate + ethanolamine. Functionally, dermonecrotic toxins cleave the phosphodiester linkage between the phosphate and headgroup of certain phospholipids (sphingolipid and lysolipid substrates), forming an alcohol (often choline) and a cyclic phosphate. This toxin acts on sphingomyelin (SM). It may also act on ceramide phosphoethanolamine (CPE), lysophosphatidylcholine (LPC) and lysophosphatidylethanolamine (LPE), but not on lysophosphatidylserine (LPS), and lysophosphatidylglycerol (LPG). It acts by transphosphatidylation, releasing exclusively cyclic phosphate products as second products. Induces dermonecrosis, hemolysis, increased vascular permeability, edema, inflammatory response, and platelet aggregation. The polypeptide is Dermonecrotic toxin LdSicTox-alphaIB1aiv (Loxosceles deserta (Desert recluse spider)).